The following is a 1028-amino-acid chain: Carbamoyl phosphate synthase large chain (1028 aa).

The carboxyphosphate synthetic domain stretch occupies residues 1–409 (MPPRRDLKKI…ALMKALRGLE (409 aa)). ATP is bound by residues Arg129, Arg169, Gly175, Gly176, Glu208, Val210, Glu215, Gly241, Val242, His243, Gln285, and Glu299. Positions 133 to 328 (QEAMQRIGLE…IAKIAALLAV (196 aa)) constitute an ATP-grasp 1 domain. Mg(2+)-binding residues include Gln285, Glu299, and Asn301. The Mn(2+) site is built by Gln285, Glu299, and Asn301. Positions 410 to 549 (RDVRALAGVR…YSTYELEDEV (140 aa)) are oligomerization domain. A carbamoyl phosphate synthetic domain region spans residues 550 to 933 (WPSQKPKVVI…AYYKAELGAG (384 aa)). Residues 674 to 866 (HALCQRLGIP…LAKLAALIAV (193 aa)) enclose the ATP-grasp 2 domain. ATP contacts are provided by Arg710, Arg750, Leu752, Glu757, Gly782, Val783, His784, Ser785, Gln825, and Glu837. Gln825, Glu837, and Asn839 together coordinate Mg(2+). Mn(2+)-binding residues include Gln825, Glu837, and Asn839. Positions 934–1028 (QRLPLSGRVR…QDWHQKAPRG (95 aa)) constitute an MGS-like domain. The interval 934-1028 (QRLPLSGRVR…QDWHQKAPRG (95 aa)) is allosteric domain.

Belongs to the CarB family. As to quaternary structure, composed of two chains; the small (or glutamine) chain promotes the hydrolysis of glutamine to ammonia, which is used by the large (or ammonia) chain to synthesize carbamoyl phosphate. Tetramer of heterodimers (alpha,beta)4. Mg(2+) is required as a cofactor. The cofactor is Mn(2+).

The catalysed reaction is hydrogencarbonate + L-glutamine + 2 ATP + H2O = carbamoyl phosphate + L-glutamate + 2 ADP + phosphate + 2 H(+). It catalyses the reaction hydrogencarbonate + NH4(+) + 2 ATP = carbamoyl phosphate + 2 ADP + phosphate + 2 H(+). It functions in the pathway amino-acid biosynthesis; L-arginine biosynthesis; carbamoyl phosphate from bicarbonate: step 1/1. The protein operates within pyrimidine metabolism; UMP biosynthesis via de novo pathway; (S)-dihydroorotate from bicarbonate: step 1/3. Functionally, large subunit of the glutamine-dependent carbamoyl phosphate synthetase (CPSase). CPSase catalyzes the formation of carbamoyl phosphate from the ammonia moiety of glutamine, carbonate, and phosphate donated by ATP, constituting the first step of 2 biosynthetic pathways, one leading to arginine and/or urea and the other to pyrimidine nucleotides. The large subunit (synthetase) binds the substrates ammonia (free or transferred from glutamine from the small subunit), hydrogencarbonate and ATP and carries out an ATP-coupled ligase reaction, activating hydrogencarbonate by forming carboxy phosphate which reacts with ammonia to form carbamoyl phosphate. This Thermus thermophilus (strain ATCC 27634 / DSM 579 / HB8) protein is Carbamoyl phosphate synthase large chain.